The chain runs to 53 residues: UPF0391 membrane protein SG0393 (53 aa).

2 consecutive transmembrane segments (helical) span residues 4–24 (WGIIFLVIALIAAALGFGGLA) and 27–47 (AAWAAKIVFVVGIILFLISLF).

This sequence belongs to the UPF0391 family.

Its subcellular location is the cell membrane. This is UPF0391 membrane protein SG0393 from Sodalis glossinidius (strain morsitans).